The following is a 955-amino-acid chain: Bifunctional glutamine synthetase adenylyltransferase/adenylyl-removing enzyme (955 aa).

An adenylyl removase region spans residues 1-458; it reads MTAQAPLSVA…QFEQTFSDKQ (458 aa). Positions 464–955 are adenylyl transferase; sequence CAAIWHADLL…GSIDAASPTP (492 aa).

The protein belongs to the GlnE family. The cofactor is Mg(2+).

It catalyses the reaction [glutamine synthetase]-O(4)-(5'-adenylyl)-L-tyrosine + phosphate = [glutamine synthetase]-L-tyrosine + ADP. It carries out the reaction [glutamine synthetase]-L-tyrosine + ATP = [glutamine synthetase]-O(4)-(5'-adenylyl)-L-tyrosine + diphosphate. In terms of biological role, involved in the regulation of glutamine synthetase GlnA, a key enzyme in the process to assimilate ammonia. When cellular nitrogen levels are high, the C-terminal adenylyl transferase (AT) inactivates GlnA by covalent transfer of an adenylyl group from ATP to specific tyrosine residue of GlnA, thus reducing its activity. Conversely, when nitrogen levels are low, the N-terminal adenylyl removase (AR) activates GlnA by removing the adenylyl group by phosphorolysis, increasing its activity. The regulatory region of GlnE binds the signal transduction protein PII (GlnB) which indicates the nitrogen status of the cell. This is Bifunctional glutamine synthetase adenylyltransferase/adenylyl-removing enzyme from Ralstonia nicotianae (strain ATCC BAA-1114 / GMI1000) (Ralstonia solanacearum).